Consider the following 415-residue polypeptide: Transcription factor gsfR2 (415 aa).

A DNA-binding region (zn(2)-C6 fungal-type) is located at residues 9–36 (CITCVQSKRKCDQGLPKCQRCLAKNIHC). Positions 65–91 (AEEPSRGCQLQRSPARPTSPTHSPHAN) are disordered. Polar residues predominate over residues 72–88 (CQLQRSPARPTSPTHSP).

It localises to the nucleus. Its function is as follows. Transcription factor that regulates expression of the gene cluster that mediates the biosynthesis of Griseofulvin, an important antifungal drug that has been in use for a long time for treating dermatophyte infections. The protein is Transcription factor gsfR2 of Penicillium aethiopicum.